The following is a 352-amino-acid chain: N-acetyl-gamma-glutamyl-phosphate reductase (352 aa).

Belongs to the NAGSA dehydrogenase family. Type 1 subfamily.

Its subcellular location is the cytoplasm. The enzyme catalyses N-acetyl-L-glutamate 5-semialdehyde + phosphate + NADP(+) = N-acetyl-L-glutamyl 5-phosphate + NADPH + H(+). Its pathway is amino-acid biosynthesis; L-arginine biosynthesis; N(2)-acetyl-L-ornithine from L-glutamate: step 3/4. Functionally, catalyzes the NADPH-dependent reduction of N-acetyl-5-glutamyl phosphate to yield N-acetyl-L-glutamate 5-semialdehyde. In Nostoc ellipsosporum, this protein is N-acetyl-gamma-glutamyl-phosphate reductase.